Consider the following 270-residue polypeptide: Chlorophyll a-b binding protein, chloroplastic (270 aa).

The transit peptide at 1–41 directs the protein to the chloroplast; it reads MASACASSTIAAVAFSSPSSQKNGSIVGATKASFLGGKRLR. Residue tryptophan 68 coordinates chlorophyll b. Residues phenylalanine 88, glutamate 107, and histidine 110 each contribute to the chlorophyll a site. Arginine 112 lines the chlorophyll b pocket. A helical transmembrane segment spans residues 113–133; it reads WAMLGAAGIFIPEFLTKIGVL. Glutamine 144 provides a ligand contact to chlorophyll a. Residues 146 to 166 form a helical membrane-spanning segment; the sequence is YFTDTTTLFVIELVLIGWAEG. Chlorophyll b is bound by residues valine 155, glutamate 165, and arginine 168. Residues lysine 221, glutamate 222, asparagine 225, arginine 227, glutamine 239, and histidine 254 each contribute to the chlorophyll a site. A helical transmembrane segment spans residues 228 to 248; sequence LAMLAVMGAWFQHIYTGTGPI.

Belongs to the light-harvesting chlorophyll a/b-binding (LHC) protein family. As to quaternary structure, the LHC complex consists of chlorophyll a-b binding proteins. The cofactor is Binds at least 14 chlorophylls (8 Chl-a and 6 Chl-b) and carotenoids such as lutein and neoxanthin.. Post-translationally, photoregulated by reversible phosphorylation of its threonine residues.

Its subcellular location is the plastid. The protein resides in the chloroplast thylakoid membrane. Its function is as follows. The light-harvesting complex (LHC) functions as a light receptor, it captures and delivers excitation energy to photosystems with which it is closely associated. This chain is Chlorophyll a-b binding protein, chloroplastic, found in Petunia hybrida (Petunia).